Here is a 491-residue protein sequence, read N- to C-terminus: NADH-ubiquinone oxidoreductase chain 4 (491 aa).

The next 14 helical transmembrane spans lie at 2–22 (IFHKNWLGLIFLLLFLGIINV), 37–57 (ALEWSLATLTATLILWAAFDM), 89–109 (ISLFFLILTALLTPICILISW), 114–134 (FLLKEFLLCLLFLEVLLMGVF), 139–159 (LLLFYILFEGILIPMFLLIGV), 169–189 (ASYYFFFYTFVGSVFMLLGIF), 215–235 (WIFAGFFLSLAVKIPQVPFHI), 245–265 (PVSGSVILAGILLKLGGYGFL), 271–291 (ILPAATEYFAPFVIMLSVIAI), 308–328 (IAYSSVAHMGLVTLGLFTHTI), 332–352 (VAAVFMMLAHGLVSSALFIAV), 372–392 (FSMPIFVSVFLVLTLTNMAIP), 412–432 (IVIGVLAATGMVWSAAYSLYL), and 457–477 (IAISPLVILIFILGVLPSLII).

This sequence belongs to the complex I subunit 4 family.

The protein localises to the mitochondrion membrane. The catalysed reaction is a ubiquinone + NADH + 5 H(+)(in) = a ubiquinol + NAD(+) + 4 H(+)(out). Functionally, core subunit of the mitochondrial membrane respiratory chain NADH dehydrogenase (Complex I) that is believed to belong to the minimal assembly required for catalysis. Complex I functions in the transfer of electrons from NADH to the respiratory chain. The immediate electron acceptor for the enzyme is believed to be ubiquinone. This Metridium senile (Brown sea anemone) protein is NADH-ubiquinone oxidoreductase chain 4 (ND4).